We begin with the raw amino-acid sequence, 476 residues long: Sulfate adenylyltransferase subunit 1 (476 aa).

A tr-type G domain is found at 25-241 (KSLLRFLTCG…LETVEVQRVV (217 aa)). The interval 34–41 (GSVDDGKS) is G1. 34-41 (GSVDDGKS) is a binding site for GTP. The G2 stretch occupies residues 92 to 96 (GITID). The tract at residues 113 to 116 (DTPG) is G3. GTP-binding positions include 113 to 117 (DTPGH) and 168 to 171 (NKMD). Residues 168-171 (NKMD) form a G4 region. The segment at 206–208 (SAL) is G5.

Belongs to the TRAFAC class translation factor GTPase superfamily. Classic translation factor GTPase family. CysN/NodQ subfamily. As to quaternary structure, heterodimer composed of CysD, the smaller subunit, and CysN.

The catalysed reaction is sulfate + ATP + H(+) = adenosine 5'-phosphosulfate + diphosphate. The protein operates within sulfur metabolism; hydrogen sulfide biosynthesis; sulfite from sulfate: step 1/3. Its function is as follows. With CysD forms the ATP sulfurylase (ATPS) that catalyzes the adenylation of sulfate producing adenosine 5'-phosphosulfate (APS) and diphosphate, the first enzymatic step in sulfur assimilation pathway. APS synthesis involves the formation of a high-energy phosphoric-sulfuric acid anhydride bond driven by GTP hydrolysis by CysN coupled to ATP hydrolysis by CysD. The chain is Sulfate adenylyltransferase subunit 1 from Erwinia tasmaniensis (strain DSM 17950 / CFBP 7177 / CIP 109463 / NCPPB 4357 / Et1/99).